The following is a 358-amino-acid chain: Bi-functional coumaroyl CoA and feruloyl CoA ortho-hydroxylase F6H2-1-1 (358 aa).

In terms of domain architecture, Fe2OG dioxygenase spans 207 to 308 (GSRRININYY…RISVPVFVNP (102 aa)). Tyr216 lines the 2-oxoglutarate pocket. Positions 231, 233, and 289 each coordinate Fe cation. The 2-oxoglutarate site is built by Arg299 and Ser301.

It belongs to the iron/ascorbate-dependent oxidoreductase family. L-ascorbate serves as cofactor. The cofactor is Fe(2+). Mostly expressed in underground stems and stems, and, at low levels, in tubers, leaves and petioles.

The catalysed reaction is (E)-4-coumaroyl-CoA + 2-oxoglutarate + O2 = (E)-2,4-dihydroxycinnamoyl-CoA + succinate + CO2. It carries out the reaction (E)-feruloyl-CoA + 2-oxoglutarate + O2 = (E)-6-hydroxyferuloyl-CoA + succinate + CO2. The protein operates within phenylpropanoid metabolism. Its function is as follows. 2-oxoglutarate (OG)- and Fe(II)-dependent dioxygenase (2OGD) involved in scopoletin and umbelliferone biosynthesis. Converts feruloyl CoA into 6'-hydroxyferuloyl CoA, and p-coumaroyl CoA into 2,4-dihydroxycinnamoyl-CoA, but has no activity with caffeoyl-CoA. This chain is Bi-functional coumaroyl CoA and feruloyl CoA ortho-hydroxylase F6H2-1-1, found in Ipomoea batatas (Sweet potato).